Here is a 142-residue protein sequence, read N- to C-terminus: Clock-controlled protein 6 (142 aa).

It belongs to the SED1 family.

This is Clock-controlled protein 6 (ccg-6) from Neurospora crassa (strain ATCC 24698 / 74-OR23-1A / CBS 708.71 / DSM 1257 / FGSC 987).